We begin with the raw amino-acid sequence, 628 residues long: MBT domain-containing protein 1 (628 aa).

The segment at 1–31 (MFDGYDSCSEDTSSSSSSEESEEEVAPLPSN) is disordered. An FCS-type zinc finger spans residues 45–80 (PDGKSGMATCEMCGMVGVRDAFYSKTKRFCSVSCSR). Residues Cys54, Cys57, Cys74, and Cys78 each contribute to the Zn(2+) site. Lys115 carries the post-translational modification N6-acetyllysine. MBT repeat units follow at residues 141–245 (FSWG…LVPP), 253–350 (TNWK…IGHR), 351–456 (FKRS…LTPP), and 464–560 (FKWF…LQPP). Disordered stretches follow at residues 560–590 (PASQSSRENQSASSKQKKKAKSQQYKGHKKM) and 606–628 (NFLQGASDQESNGSANFYIKQEP). The segment covering 562 to 573 (SQSSRENQSASS) has biased composition (low complexity). Basic residues predominate over residues 574–590 (KQKKKAKSQQYKGHKKM). The span at 609–620 (QGASDQESNGSA) shows a compositional bias: polar residues.

In terms of assembly, monomer. Component of the NuA4 histone acetyltransferase complex. Interacts with EPC1; interaction is direct and promotes recruitment of MBTD1 into the NuA4 histone acetyltransferase complex.

The protein localises to the nucleus. The protein resides in the chromosome. Its function is as follows. Chromatin reader component of the NuA4 histone acetyltransferase complex, a multiprotein complex involved in transcriptional activation of select genes principally by acetylation of nucleosomal histones H4 and H2A. The NuA4 complex plays a direct role in repair of DNA double-strand breaks (DSBs) by promoting homologous recombination (HR). MBTD1 specifically recognizes and binds monomethylated and dimethylated 'Lys-20' on histone H4 (H4K20me1 and H4K20me2, respectively). In the NuA4 complex, MBTD1 promotes recruitment of the complex to H4K20me marks by competing with TP53BP1 for binding to H4K20me. Following recruitment to H4K20me at DNA breaks, the NuA4 complex catalyzes acetylation of 'Lys-15' on histone H2A (H2AK15), blocking the ubiquitination mark required for TP53BP1 localization at DNA breaks, thereby promoting homologous recombination (HR). This chain is MBT domain-containing protein 1, found in Homo sapiens (Human).